The sequence spans 101 residues: Small ribosomal subunit protein uS14 (101 aa).

This sequence belongs to the universal ribosomal protein uS14 family. Part of the 30S ribosomal subunit. Contacts proteins S3 and S10.

Functionally, binds 16S rRNA, required for the assembly of 30S particles and may also be responsible for determining the conformation of the 16S rRNA at the A site. In Polaromonas naphthalenivorans (strain CJ2), this protein is Small ribosomal subunit protein uS14.